The sequence spans 96 residues: UPF0235 protein YggU (96 aa).

This sequence belongs to the UPF0235 family.

The protein is UPF0235 protein YggU of Salmonella typhi.